A 119-amino-acid polypeptide reads, in one-letter code: Large ribosomal subunit protein bL19 (119 aa).

Belongs to the bacterial ribosomal protein bL19 family.

This protein is located at the 30S-50S ribosomal subunit interface and may play a role in the structure and function of the aminoacyl-tRNA binding site. This chain is Large ribosomal subunit protein bL19, found in Limosilactobacillus reuteri (strain DSM 20016) (Lactobacillus reuteri).